Here is a 325-residue protein sequence, read N- to C-terminus: DNA-directed RNA polymerase subunit alpha (325 aa).

The alpha N-terminal domain (alpha-NTD) stretch occupies residues 1–238 (MSPKNLLKGF…DHLTVFINFE (238 aa)). The alpha C-terminal domain (alpha-CTD) stretch occupies residues 255–325 (LKAALSKHVE…MGLSFGMRDF (71 aa)).

The protein belongs to the RNA polymerase alpha chain family. In terms of assembly, homodimer. The RNAP catalytic core consists of 2 alpha, 1 beta, 1 beta' and 1 omega subunit. When a sigma factor is associated with the core the holoenzyme is formed, which can initiate transcription.

It carries out the reaction RNA(n) + a ribonucleoside 5'-triphosphate = RNA(n+1) + diphosphate. Its function is as follows. DNA-dependent RNA polymerase catalyzes the transcription of DNA into RNA using the four ribonucleoside triphosphates as substrates. This is DNA-directed RNA polymerase subunit alpha from Leptospira biflexa serovar Patoc (strain Patoc 1 / Ames).